Reading from the N-terminus, the 504-residue chain is Arabinose import ATP-binding protein AraG (504 aa).

2 ABC transporter domains span residues 8–243 (LSFR…MVGR) and 256–499 (YGEE…MPKV). An ATP-binding site is contributed by 40-47 (GENGAGKS).

Belongs to the ABC transporter superfamily. Arabinose importer (TC 3.A.1.2.2) family. As to quaternary structure, the complex is composed of two ATP-binding proteins (AraG), two transmembrane proteins (AraH) and a solute-binding protein (AraF).

It localises to the cell inner membrane. The enzyme catalyses L-arabinose(out) + ATP + H2O = L-arabinose(in) + ADP + phosphate + H(+). Functionally, part of the ABC transporter complex AraFGH involved in arabinose import. Responsible for energy coupling to the transport system. In Escherichia coli O157:H7, this protein is Arabinose import ATP-binding protein AraG.